The primary structure comprises 88 residues: Small ribosomal subunit protein bS16c (88 aa).

Belongs to the bacterial ribosomal protein bS16 family.

Its subcellular location is the plastid. It is found in the chloroplast. The sequence is that of Small ribosomal subunit protein bS16c from Sinapis alba (White mustard).